The chain runs to 187 residues: CASP-like protein 2C1 (187 aa).

At 1–14 the chain is on the cytoplasmic side; it reads MVAAARVVSGVKAE. A helical transmembrane segment spans residues 15–35; it reads GLLRGACAALAAAAALLLGLS. Over 36-54 the chain is Extracellular; that stretch reads TQTETVLLVRKKGTVKDVQ. Residues 55–75 traverse the membrane as a helical segment; that stretch reads ALWVLAMAAASAAGYHLLQLL. The Cytoplasmic portion of the chain corresponds to 76–97; the sequence is KCLYLGRGGGRALAWTCLLLDK. A helical transmembrane segment spans residues 98-118; that stretch reads ACAYATFATTVAAAQACVVAL. At 119–139 the chain is on the extracellular side; the sequence is DGAHALQWTKLCNIYTRFCEQ. Residues 140 to 160 form a helical membrane-spanning segment; sequence VAGSLVLGMLAAVGTAVLSAA. The Cytoplasmic segment spans residues 161-187; the sequence is SARNVFRHYYCSSHSPPAPPPETCDAH.

Belongs to the Casparian strip membrane proteins (CASP) family. As to quaternary structure, homodimer and heterodimers.

The protein localises to the cell membrane. The chain is CASP-like protein 2C1 from Zea mays (Maize).